We begin with the raw amino-acid sequence, 265 residues long: Capsule polysaccharide export inner-membrane protein BexB (265 aa).

Transmembrane regions (helical) follow at residues 37–57 (IGFF…VMMW), 64–84 (KFST…AMMW), 118–138 (LLEV…LVMI), 151–171 (LIAW…ICAI), 178–198 (FGKI…AFFF), and 235–255 (ESIG…LVMV). The ABC transmembrane type-2 domain occupies 37 to 258 (IGFFWLFVEP…LLGLVMVKNF (222 aa)).

This sequence belongs to the ABC-2 integral membrane protein family.

It localises to the cell inner membrane. In terms of biological role, may form an ATP-driven capsule polysaccharide export apparatus, in association with the BexA, BexC and BexD proteins. This chain is Capsule polysaccharide export inner-membrane protein BexB (bexB), found in Haemophilus influenzae.